Here is a 467-residue protein sequence, read N- to C-terminus: 3-isopropylmalate dehydratase large subunit (467 aa).

[4Fe-4S] cluster is bound by residues Cys-349, Cys-409, and Cys-412.

This sequence belongs to the aconitase/IPM isomerase family. LeuC type 1 subfamily. Heterodimer of LeuC and LeuD. It depends on [4Fe-4S] cluster as a cofactor.

It carries out the reaction (2R,3S)-3-isopropylmalate = (2S)-2-isopropylmalate. The protein operates within amino-acid biosynthesis; L-leucine biosynthesis; L-leucine from 3-methyl-2-oxobutanoate: step 2/4. Its function is as follows. Catalyzes the isomerization between 2-isopropylmalate and 3-isopropylmalate, via the formation of 2-isopropylmaleate. The chain is 3-isopropylmalate dehydratase large subunit from Ruegeria sp. (strain TM1040) (Silicibacter sp.).